Reading from the N-terminus, the 55-residue chain is Spermatid nuclear transition protein 1 (55 aa).

The span at M1–K42 shows a compositional bias: basic residues. Residues M1 to L55 are disordered. S9, S36, S37, and S40 each carry phosphoserine.

It belongs to the nuclear transition protein 1 family. As to expression, testis.

The protein resides in the nucleus. It localises to the chromosome. Its function is as follows. Plays a key role in the replacement of histones to protamine in the elongating spermatids of mammals. In condensing spermatids, loaded onto the nucleosomes, where it promotes the recruitment and processing of protamines, which are responsible for histone eviction. This Ovis aries (Sheep) protein is Spermatid nuclear transition protein 1 (TNP1).